Consider the following 396-residue polypeptide: Elongation factor Tu (396 aa).

The tr-type G domain occupies 11–205; it reads KPHVNIGTIG…TVDEYVPTPE (195 aa). The tract at residues 20–27 is G1; the sequence is GHVDHGKT. 20–27 provides a ligand contact to GTP; it reads GHVDHGKT. Mg(2+) is bound at residue Thr27. The G2 stretch occupies residues 61 to 65; it reads GITIN. The G3 stretch occupies residues 82-85; that stretch reads DAPG. Residues 82 to 86 and 137 to 140 each bind GTP; these read DAPGH and NKTD. The interval 137–140 is G4; sequence NKTD. Positions 175-177 are G5; that stretch reads SAL.

This sequence belongs to the TRAFAC class translation factor GTPase superfamily. Classic translation factor GTPase family. EF-Tu/EF-1A subfamily. In terms of assembly, monomer.

The protein resides in the cytoplasm. The enzyme catalyses GTP + H2O = GDP + phosphate + H(+). GTP hydrolase that promotes the GTP-dependent binding of aminoacyl-tRNA to the A-site of ribosomes during protein biosynthesis. The polypeptide is Elongation factor Tu (Latilactobacillus sakei subsp. sakei (strain 23K) (Lactobacillus sakei subsp. sakei)).